A 437-amino-acid chain; its full sequence is Phosphomethylpyrimidine synthase (437 aa).

Substrate-binding positions include asparagine 69, methionine 98, tyrosine 127, histidine 163, 185–187 (SRG), 226–229 (DACR), and glutamate 265. Histidine 269 provides a ligand contact to Zn(2+). Position 292 (tyrosine 292) interacts with substrate. Residue histidine 333 coordinates Zn(2+). Residues cysteine 409, cysteine 412, and cysteine 416 each contribute to the [4Fe-4S] cluster site.

This sequence belongs to the ThiC family. [4Fe-4S] cluster serves as cofactor.

The enzyme catalyses 5-amino-1-(5-phospho-beta-D-ribosyl)imidazole + S-adenosyl-L-methionine = 4-amino-2-methyl-5-(phosphooxymethyl)pyrimidine + CO + 5'-deoxyadenosine + formate + L-methionine + 3 H(+). The protein operates within cofactor biosynthesis; thiamine diphosphate biosynthesis. Functionally, catalyzes the synthesis of the hydroxymethylpyrimidine phosphate (HMP-P) moiety of thiamine from aminoimidazole ribotide (AIR) in a radical S-adenosyl-L-methionine (SAM)-dependent reaction. In Clostridium botulinum (strain Okra / Type B1), this protein is Phosphomethylpyrimidine synthase.